The sequence spans 84 residues: RNA-binding protein Hfq (84 aa).

Residues 11–71 enclose the Sm domain; it reads DTFLNHVRKN…ISTIMPGHPV (61 aa).

Belongs to the Hfq family. As to quaternary structure, homohexamer.

RNA chaperone that binds small regulatory RNA (sRNAs) and mRNAs to facilitate mRNA translational regulation in response to envelope stress, environmental stress and changes in metabolite concentrations. Also binds with high specificity to tRNAs. The sequence is that of RNA-binding protein Hfq from Methylorubrum populi (strain ATCC BAA-705 / NCIMB 13946 / BJ001) (Methylobacterium populi).